We begin with the raw amino-acid sequence, 560 residues long: Developmental and secondary metabolism regulator veA (560 aa).

Residues 35–241 (GRRLWYRMRV…AEQGCRVRIR (207 aa)) enclose the Velvet domain. The Nuclear localization signal motif lies at 49–54 (ERARAC). Disordered regions lie at residues 49–70 (ERAR…VDPP), 171–197 (KEDK…ATGG), and 250–560 (DGKG…RLRY). Over residues 171–183 (KEDKDKDKERDVE) the composition is skewed to basic and acidic residues. Positions 336–355 (AAPPQPFAQPPSVPASPVYP) are enriched in pro residues. Over residues 395 to 405 (PRRESIHHDYR) the composition is skewed to basic and acidic residues. Pro residues predominate over residues 411 to 439 (QLPPLPPPPYYPPTPQQSHMPPPQPPQVL). Residues 444 to 453 (IDSNSKSNNR) are compositionally biased toward polar residues. The segment at 455 to 496 (PMPSPTALANSAPRPLASLAPLAPLMQSTSSSAGKGPVHPAT) is PEST. Residues 461–479 (ALANSAPRPLASLAPLAPL) are compositionally biased toward low complexity. Composition is skewed to basic and acidic residues over residues 508-535 (RAHD…RSED) and 546-560 (RRAD…RLRY).

This sequence belongs to the velvet family. VeA subfamily. As to quaternary structure, component of the heterotrimeric velvet complex composed of laeA, veA and velB; VeA acting as a bridging protein between laeA and velB.

Its subcellular location is the nucleus. It localises to the cytoplasm. Component of the velvet transcription factor complex that controls sexual/asexual developmental ratio in response to light, promoting sexual development in the darkness while stimulating asexual sporulation under illumination. The velvet complex acts as a global regulator for secondary metabolite gene expression. Positively regulates chaetoglobosin A biosynthesis by controlling the expression of core genes of the chaetoglobosin A biosynthetic gene cluster and other relevant regulators in a light-dependent manner. VeA directly regulates transcription factors brlA, laeA, and the chaetoglobosin A cluster-specific transcription regulator cheR. Also directly regulates the expression of one of the chaetoglobosin A cluster cytochrome P450 monooxygenases (cheE or cheG), but only indirectly regulates the expression of the PKS-NRPS hybrid cheA. Moreover, VeA has a significant effect on the asexual spores production, irrespective of light or dark condition. This Chaetomium globosum (strain ATCC 6205 / CBS 148.51 / DSM 1962 / NBRC 6347 / NRRL 1970) (Soil fungus) protein is Developmental and secondary metabolism regulator veA.